The following is a 314-amino-acid chain: Olfactory receptor 9I1 (314 aa).

Residues 1-25 (MAKNNLTRVTEFILMGFMDHPKLEI) are Extracellular-facing. Residue asparagine 5 is glycosylated (N-linked (GlcNAc...) asparagine). A helical membrane pass occupies residues 26–46 (PLFLVFLSFYLVTLLGNVGMI). Residues 47 to 54 (MLIQVDVK) lie on the Cytoplasmic side of the membrane. Residues 55–75 (LYTPMYFFLSHLSLLDACYTS) form a helical membrane-spanning segment. Topologically, residues 76–99 (VITPQILATLATGKTVISYGHCAA) are extracellular. A disulfide bridge connects residues cysteine 97 and cysteine 189. The chain crosses the membrane as a helical span at residues 100-120 (QFFLFTICAGTECFLLAVMAY). The Cytoplasmic portion of the chain corresponds to 121-139 (DRYAAIRNPLLYTVAMNPR). Residues 140–160 (LCWSLVVGAYVCGVSGAILRT) form a helical membrane-spanning segment. Residues 161-197 (TCTFTLSFCKDNQINFFFCDLPPLLKLACSDTANIEI) lie on the Extracellular side of the membrane. A helical transmembrane segment spans residues 198 to 217 (VIIFFGNFVILANASVILIS). Topologically, residues 218 to 237 (YLLIIKTILKVKSSGGRAKT) are cytoplasmic. Residues 238–258 (FSTCASHITAVALFFGALIFM) traverse the membrane as a helical segment. The Extracellular segment spans residues 259–271 (YLQSGSGKSLEED). A helical transmembrane segment spans residues 272–292 (KVVSVFYTVVIPMLNPLIYSL). The Cytoplasmic segment spans residues 293 to 314 (RNKDVKDAFRKVARRLQVSLSM).

It belongs to the G-protein coupled receptor 1 family.

It localises to the cell membrane. In terms of biological role, odorant receptor. This chain is Olfactory receptor 9I1 (OR9I1), found in Homo sapiens (Human).